The sequence spans 399 residues: UDP-N-acetylglucosamine--N-acetylmuramyl-(pentapeptide) pyrophosphoryl-undecaprenol N-acetylglucosamine transferase (399 aa).

UDP-N-acetyl-alpha-D-glucosamine contacts are provided by residues 29 to 31 (TAG), Asn-148, Arg-185, Ser-219, and Gln-318.

Belongs to the glycosyltransferase 28 family. MurG subfamily.

It localises to the cell membrane. It carries out the reaction di-trans,octa-cis-undecaprenyl diphospho-N-acetyl-alpha-D-muramoyl-L-alanyl-D-glutamyl-meso-2,6-diaminopimeloyl-D-alanyl-D-alanine + UDP-N-acetyl-alpha-D-glucosamine = di-trans,octa-cis-undecaprenyl diphospho-[N-acetyl-alpha-D-glucosaminyl-(1-&gt;4)]-N-acetyl-alpha-D-muramoyl-L-alanyl-D-glutamyl-meso-2,6-diaminopimeloyl-D-alanyl-D-alanine + UDP + H(+). Its pathway is cell wall biogenesis; peptidoglycan biosynthesis. Cell wall formation. Catalyzes the transfer of a GlcNAc subunit on undecaprenyl-pyrophosphoryl-MurNAc-pentapeptide (lipid intermediate I) to form undecaprenyl-pyrophosphoryl-MurNAc-(pentapeptide)GlcNAc (lipid intermediate II). This Mycobacterium ulcerans (strain Agy99) protein is UDP-N-acetylglucosamine--N-acetylmuramyl-(pentapeptide) pyrophosphoryl-undecaprenol N-acetylglucosamine transferase.